The primary structure comprises 337 residues: Aspartate carbamoyltransferase catalytic subunit (337 aa).

Arg-59 and Thr-60 together coordinate carbamoyl phosphate. Lys-87 is a binding site for L-aspartate. Carbamoyl phosphate-binding residues include Arg-109, His-142, and Gln-145. L-aspartate-binding residues include Arg-182 and Arg-253. Positions 294 and 295 each coordinate carbamoyl phosphate.

Belongs to the aspartate/ornithine carbamoyltransferase superfamily. ATCase family. In terms of assembly, heterododecamer (2C3:3R2) of six catalytic PyrB chains organized as two trimers (C3), and six regulatory PyrI chains organized as three dimers (R2).

The enzyme catalyses carbamoyl phosphate + L-aspartate = N-carbamoyl-L-aspartate + phosphate + H(+). The protein operates within pyrimidine metabolism; UMP biosynthesis via de novo pathway; (S)-dihydroorotate from bicarbonate: step 2/3. Its function is as follows. Catalyzes the condensation of carbamoyl phosphate and aspartate to form carbamoyl aspartate and inorganic phosphate, the committed step in the de novo pyrimidine nucleotide biosynthesis pathway. The sequence is that of Aspartate carbamoyltransferase catalytic subunit from Prochlorococcus marinus (strain MIT 9211).